The chain runs to 478 residues: Transcript termination protein A18 (478 aa).

A Helicase ATP-binding domain is found at 98 to 254 (KLSTHRPMYM…NDVVNVLKVS (157 aa)). 111-118 (LSCGFGKT) lines the ATP pocket. The DESH box motif lies at 204 to 207 (DESH). Residues 302-454 (PRNNLIVDTV…IVSVSTDKLG (153 aa)) form the Helicase C-terminal domain. The disordered stretch occupies residues 456-478 (QQEGKEGTKEEPALTKAFSSQIR). The span at 458-468 (EGKEGTKEEPA) shows a compositional bias: basic and acidic residues.

The protein belongs to the helicase family. Poxviruses subfamily. As to quaternary structure, interacts with G2. Might be part of a transcription complex composed at least of G2, A18, and H5.

It localises to the virion. Functionally, DNA helicase which seems to act as a postreplicative transcription termination factor. Involved in ATP-dependent release of nascent RNA. Forms a stable complex with single-stranded DNA, and to a lesser extent RNA. The sequence is that of Transcript termination protein A18 from Oryctolagus cuniculus (Rabbit).